The chain runs to 140 residues: Putative pre-16S rRNA nuclease (140 aa).

This sequence belongs to the YqgF nuclease family.

The protein localises to the cytoplasm. Could be a nuclease involved in processing of the 5'-end of pre-16S rRNA. This chain is Putative pre-16S rRNA nuclease, found in Pasteurella multocida (strain Pm70).